Reading from the N-terminus, the 285-residue chain is Homeobox protein Hox-A4 (285 aa).

Disordered regions lie at residues proline 19 to alanine 70 and alanine 94 to alanine 130. The segment covering glycine 27 to glycine 41 has biased composition (gly residues). Residues arginine 44–alanine 70 are compositionally biased toward low complexity. A compositionally biased stretch (pro residues) spans glycine 106–proline 118. Positions valine 159–lysine 164 match the Antp-type hexapeptide motif. Residues proline 180 to histidine 239 constitute a DNA-binding region (homeobox). Residues aspartate 238–isoleucine 285 are disordered.

This sequence belongs to the Antp homeobox family. Deformed subfamily.

The protein localises to the nucleus. Functionally, sequence-specific transcription factor which is part of a developmental regulatory system that provides cells with specific positional identities on the anterior-posterior axis. Binds to sites in the 5'-flanking sequence of its coding region with various affinities. The consensus sequences of the high and low affinity binding sites are 5'-TAATGA[CG]-3' and 5'-CTAATTTT-3'. The protein is Homeobox protein Hox-A4 (Hoxa4) of Mus musculus (Mouse).